The chain runs to 291 residues: Trimeric intracellular cation channel type B (291 aa).

Topologically, residues 1–15 (MESPWNELTLAFSRT) are lumenal. A helical transmembrane segment spans residues 16-33 (SMFPFFDIAHYLVSVMAL). Residues 34–47 (KHQPGAAALAWKNP) are Cytoplasmic-facing. A helical transmembrane segment spans residues 48–69 (LSSWFTAMLHCFGGGILSCVLL). The Lumenal portion of the chain corresponds to 70–80 (AEPPLRFLANN). Residues 81–100 (TNILLASSIWYIAFFCPCDL) traverse the membrane as a helical segment. Topologically, residues 101–103 (ISQ) are cytoplasmic. The helical transmembrane segment at 104-122 (AYSFLPVQLLAAGMKEVTR) threads the bilayer. A 1,2-diacyl-sn-glycero-3-phospho-(1D-myo-inositol-4,5-bisphosphate)-binding residues include Lys-118 and Arg-122. The Lumenal segment spans residues 123–138 (TWKIVGGVTHANSYYK). The helical transmembrane segment at 139–156 (NGWIVMIAVGWARGAGGS) threads the bilayer. Over 157-179 (IITNFEQLVKGCWKPEAEEWLKM) the chain is Cytoplasmic. A helical transmembrane segment spans residues 180–196 (SYPAKVTLLGSVIFTFQ). At 197–207 (QTKYLAISKHN) the chain is on the lumenal side. The helical transmembrane segment at 208–225 (LMFLFTVFLVATKITMMI) threads the bilayer. Over 226 to 291 (TKTALVPFAC…VKKKHSKKTE (66 aa)) the chain is Cytoplasmic. The disordered stretch occupies residues 257–291 (KSETKSSFNGTGSSTSKPVANASDKVKKKHSKKTE). The segment covering 261–274 (KSSFNGTGSSTSKP) has biased composition (polar residues). Position 262 is a phosphoserine (Ser-262). The segment covering 282 to 291 (VKKKHSKKTE) has biased composition (basic residues).

The protein belongs to the TMEM38 family. In terms of assembly, homotrimer; conformation seems to be controled by binding to diacylglycerol (DAG).

The protein localises to the endoplasmic reticulum membrane. The catalysed reaction is K(+)(in) = K(+)(out). Its activity is regulated as follows. Channel activity is activated by increased cytosolic Ca(2+) levels and blocked by luminal high Ca(2+) levels. Intracellular monovalent cation channel required for maintenance of rapid intracellular calcium release. Acts as a potassium counter-ion channel that functions in synchronization with calcium release from intracellular stores. Activated by increased cytosolic Ca(2+) levels. The sequence is that of Trimeric intracellular cation channel type B (TMEM38B) from Bos taurus (Bovine).